We begin with the raw amino-acid sequence, 92 residues long: Small ribosomal subunit protein uS19 (92 aa).

The protein belongs to the universal ribosomal protein uS19 family.

Functionally, protein S19 forms a complex with S13 that binds strongly to the 16S ribosomal RNA. This Gloeobacter violaceus (strain ATCC 29082 / PCC 7421) protein is Small ribosomal subunit protein uS19.